We begin with the raw amino-acid sequence, 387 residues long: Mitochondrial import inner membrane translocase subunit TIM50 (387 aa).

Residues 1 to 26 (MSAVSVYPMCVRASRGLLRLRQGARC) constitute a mitochondrion transit peptide. The Mitochondrial matrix segment spans residues 27 to 100 (STAPPLLDVV…QKENTAYAKK (74 aa)). The segment at 61-93 (LQQQQKSQEQPPPEGEDSGHKQDEQGEDKKQKE) is disordered. The segment covering 77–93 (DSGHKQDEQGEDKKQKE) has biased composition (basic and acidic residues). A helical transmembrane segment spans residues 101–121 (MVLRLAGIMGLGGTVGIVYIF). Topologically, residues 122 to 387 (GSNSVDEQGN…AGRFWSRKQQ (266 aa)) are mitochondrial intermembrane. The FCP1 homology domain occupies 178-321 (YYQPPYTLVL…YDLAAFLKTI (144 aa)).

Belongs to the TIM50 family. As to quaternary structure, component of the TIM23 complex at least composed of timm23, timm17 and timm50.

The protein resides in the mitochondrion inner membrane. Essential component of the TIM23 complex, a complex that mediates the translocation of transit peptide-containing proteins across the mitochondrial inner membrane. This is Mitochondrial import inner membrane translocase subunit TIM50 (timm50) from Danio rerio (Zebrafish).